We begin with the raw amino-acid sequence, 299 residues long: Nucleophosmin (299 aa).

Residues 125-134 (ESSDDEDEEH) are compositionally biased toward acidic residues. Positions 125–247 (ESSDDEDEEH…TPKTPLSSEE (123 aa)) are disordered. Positions 153-158 (PRKKTR) match the Nuclear localization signal motif. Over residues 160-187 (EEEEEDSDEDDDDDEDDDDEDDDEEEEE) the composition is skewed to acidic residues. A compositionally biased stretch (basic and acidic residues) spans 188–197 (TPVKKTDSTK). Positions 189 to 195 (PVKKTDS) match the Nuclear localization signal motif. Repeats lie at residues 218 to 220 (KTP), 221 to 223 (KTP), 237 to 239 (KTP), and 240 to 242 (KTP). The interval 218-242 (KTPKTPEQKGKQDTKPQTPKTPKTP) is 4 X 3 AA repeats of K-T-P. Basic and acidic residues predominate over residues 221–231 (KTPEQKGKQDT). Residues 232-242 (KPQTPKTPKTP) show a composition bias toward low complexity.

It belongs to the nucleoplasmin family. As to quaternary structure, decamer formed by two pentameric rings associated in a head-to-head fashion. Phosphorylated.

The protein resides in the cytoplasm. Its subcellular location is the nucleus. The protein localises to the nucleoplasm. It is found in the nucleolus. In terms of biological role, acts as a chaperonin for the core histones H3, H2B and H4. Associated with nucleolar ribonucleoprotein structures and bind single-stranded nucleic acids. It may function in the assembly and/or transport of ribosome. May stimulate endonuclease activity on apurinic/apyrimidinic (AP) double-stranded DNA. May inhibit endonuclease activity on AP single-stranded RNA. The sequence is that of Nucleophosmin (npm1) from Xenopus laevis (African clawed frog).